The following is an 88-amino-acid chain: Putative carnobacteriocin-BM1 immunity protein (88 aa).

Could impart immunity to carnobacteriocin-BM1 to naturally sensitive host strains. In Carnobacterium maltaromaticum (Carnobacterium piscicola), this protein is Putative carnobacteriocin-BM1 immunity protein.